Consider the following 860-residue polypeptide: Transforming growth factor-beta receptor-associated protein 1 (860 aa).

One can recognise a CNH domain in the interval 24 to 297 (HISIECVECC…HILQDFEGRV (274 aa)). A CHCR repeat occupies 564–732 (RPLDEQQQTS…YLRAGPSAQD (169 aa)).

This sequence belongs to the TRAP1 family. In terms of assembly, interacts with TGFBR2 and ACVR2B; in the absence of ligand stimulation. Interacts with TGFBR1, ACVRL1, BMPR1A and ACVR1B; in the absence of ligand stimulation and to a less extent. Interacts with SMAD4; the interaction seems to be mutually exclusive with the interaction of SMAD4 and phosphorylated SMAD2. May interact with ALOX5. Interacts with RAB5C. Interacts with VPS8, VPS11 and VPS16. Component of the putative class C core vacuole/endosome tethering (CORVET) complex; the core of which composed of the class C Vps proteins VPS11, VPS16, VPS18 and VPS33A, is associated with VPS8 and TGFBRAP1.

It is found in the cytoplasm. The protein resides in the early endosome. Its function is as follows. Plays a role in the TGF-beta/activin signaling pathway. It associates with inactive heteromeric TGF-beta and activin receptor complexes, mainly through the type II receptor, and is released upon activation of signaling. May recruit SMAD4 to the vicinity of the receptor complex and facilitate its interaction with receptor-regulated Smads, such as SMAD2. Functionally, plays a role in vesicle-mediated protein trafficking of the endocytic membrane transport pathway. Believed to act as a component of the putative CORVET endosomal tethering complexes which is proposed to be involved in the Rab5-to-Rab7 endosome conversion probably implicating MON1A/B, and via binding SNAREs and SNARE complexes to mediate tethering and docking events during SNARE-mediated membrane fusion. The CORVET complex is proposed to function as a Rab5 effector to mediate early endosome fusion probably in specific endosome subpopulations. Functions predominantly in APPL1-containing endosomes and in degradative but not recycling trafficking of endocytosed cargo. The protein is Transforming growth factor-beta receptor-associated protein 1 (Tgfbrap1) of Mus musculus (Mouse).